Reading from the N-terminus, the 308-residue chain is Very-long-chain enoyl-CoA reductase (308 aa).

Topologically, residues 1–86 (MKHYEVEILD…YFRDLGAQIS (86 aa)) are cytoplasmic. K22 carries the N6-acetyllysine modification. Phosphoserine is present on S58. K60 carries the N6-acetyllysine modification. Residues 87–106 (WVTVFLTEYAGPLFIYLLFY) traverse the membrane as a helical segment. Over 107–124 (FRVPFIYGRKYDFTSSRH) the chain is Lumenal. A helical membrane pass occupies residues 125 to 147 (TVVHLACICHSFHYIKRLLETLF). The Cytoplasmic segment spans residues 148–158 (VHRFSHGTMPL). The helical transmembrane segment at 159-180 (RNIFKNCTYYWGFAAWMAYYIN) threads the bilayer. The Lumenal segment spans residues 181–189 (HPLYTPPTY). A helical transmembrane segment spans residues 190–216 (GAQQVKLALAIFVICQLGNFSIHMALR). Residues 217–245 (DLRPAGSKTRKIPYPTRNPFTWLFLLVSC) are Cytoplasmic-facing. A helical transmembrane segment spans residues 246-262 (PNYTYEVGSWIGFAIMT). Residues 263 to 264 (QC) are Lumenal-facing. The chain crosses the membrane as a helical span at residues 265 to 292 (LPVALFSLVGFTQMTIWAKGKHRSYLKE). At 293 to 308 (FRDYPPLRMPIIPFLL) the chain is on the cytoplasmic side.

It belongs to the steroid 5-alpha reductase family. In terms of assembly, interacts with ELOVL1 and LASS2. Post-translationally, glycosylated.

It localises to the endoplasmic reticulum membrane. It catalyses the reaction a very-long-chain 2,3-saturated fatty acyl-CoA + NADP(+) = a very-long-chain (2E)-enoyl-CoA + NADPH + H(+). The catalysed reaction is octadecanoyl-CoA + NADP(+) = (2E)-octadecenoyl-CoA + NADPH + H(+). The enzyme catalyses (2E,7Z,10Z,13Z,16Z)-docosapentaenoyl-CoA + NADPH + H(+) = (7Z,10Z,13Z,16Z)-docosatetraenoyl-CoA + NADP(+). It carries out the reaction (2E,7Z,10Z,13Z,16Z,19Z)-docosahexaenoyl-CoA + NADPH + H(+) = (7Z,10Z,13Z,16Z,19Z)-docosapentaenoyl-CoA + NADP(+). It catalyses the reaction (2E,8Z,11Z,14Z)-eicosatetraenoyl-CoA + NADPH + H(+) = (8Z,11Z,14Z)-eicosatrienoyl-CoA + NADP(+). The catalysed reaction is (2E)-hexadecenoyl-CoA + NADPH + H(+) = hexadecanoyl-CoA + NADP(+). The protein operates within lipid metabolism; fatty acid biosynthesis. It functions in the pathway lipid metabolism; sphingolipid metabolism. In terms of biological role, involved in both the production of very long-chain fatty acids for sphingolipid synthesis and the degradation of the sphingosine moiety in sphingolipids through the sphingosine 1-phosphate metabolic pathway. Catalyzes the last of the four reactions of the long-chain fatty acids elongation cycle. This endoplasmic reticulum-bound enzymatic process, allows the addition of 2 carbons to the chain of long- and very long-chain fatty acids/VLCFAs per cycle. This enzyme reduces the trans-2,3-enoyl-CoA fatty acid intermediate to an acyl-CoA that can be further elongated by entering a new cycle of elongation. Thereby, it participates in the production of VLCFAs of different chain lengths that are involved in multiple biological processes as precursors of membrane lipids and lipid mediators. Catalyzes the saturation step of the sphingosine 1-phosphate metabolic pathway, the conversion of trans-2-hexadecenoyl-CoA to palmitoyl-CoA. The chain is Very-long-chain enoyl-CoA reductase (TECR) from Bos taurus (Bovine).